The chain runs to 153 residues: MALLVWQDDLNIGIDVIDQQHRRIIEMLNHLHVAQTSMQRAAVGEVIDEVVDYTMSHFAFEEELMEEAGYPFCAAHKRVHEVFIKRVAEYRLRFQAGEDISDELRTMLSRWLFNHIRGDDQAYADQVKAHLNQFAREHQSGGWLGRTLKRFFG.

Positions 21, 57, 61, 76, 80, 115, and 120 each coordinate Fe cation.

The protein belongs to the hemerythrin family. As to quaternary structure, monomer.

In terms of biological role, oxygen-binding protein. May be involved in a storage mechanism or for delivery to oxygen-requiring enzymes. The oxygen-binding site contains two iron atoms. The sequence is that of Bacteriohemerythrin from Stenotrophomonas maltophilia (strain R551-3).